A 70-amino-acid polypeptide reads, in one-letter code: Large ribosomal subunit protein bL31 (70 aa).

Zn(2+) contacts are provided by C16, C18, C37, and C40.

Belongs to the bacterial ribosomal protein bL31 family. Type A subfamily. Part of the 50S ribosomal subunit. Zn(2+) is required as a cofactor.

Its function is as follows. Binds the 23S rRNA. The protein is Large ribosomal subunit protein bL31 of Haemophilus ducreyi (strain 35000HP / ATCC 700724).